Consider the following 464-residue polypeptide: Cysteine--tRNA ligase (464 aa).

Position 27 (cysteine 27) interacts with Zn(2+). The short motif at 29 to 39 is the 'HIGH' region element; sequence PTVYDDAHLGH. Residues cysteine 203, histidine 234, and glutamate 238 each coordinate Zn(2+). Residues 266–270 carry the 'KMSKS' region motif; sequence KMSKS. Lysine 269 is an ATP binding site.

The protein belongs to the class-I aminoacyl-tRNA synthetase family. As to quaternary structure, monomer. The cofactor is Zn(2+).

It localises to the cytoplasm. It carries out the reaction tRNA(Cys) + L-cysteine + ATP = L-cysteinyl-tRNA(Cys) + AMP + diphosphate. The sequence is that of Cysteine--tRNA ligase from Campylobacter concisus (strain 13826).